The sequence spans 127 residues: uncharacterized protein (127 aa).

Residues P1–Q24 are disordered.

This is an uncharacterized protein from Homo sapiens (Human).